The chain runs to 167 residues: Large ribosomal subunit protein uL10 (167 aa).

This sequence belongs to the universal ribosomal protein uL10 family. Part of the ribosomal stalk of the 50S ribosomal subunit. The N-terminus interacts with L11 and the large rRNA to form the base of the stalk. The C-terminus forms an elongated spine to which L12 dimers bind in a sequential fashion forming a multimeric L10(L12)X complex.

In terms of biological role, forms part of the ribosomal stalk, playing a central role in the interaction of the ribosome with GTP-bound translation factors. The sequence is that of Large ribosomal subunit protein uL10 from Mycoplasma mobile (strain ATCC 43663 / 163K / NCTC 11711) (Mesomycoplasma mobile).